Here is a 411-residue protein sequence, read N- to C-terminus: Dual-specificity RNA methyltransferase RlmN (411 aa).

Glu125 serves as the catalytic Proton acceptor. The 250-residue stretch at 131–380 (EEGRGTLCIS…IRTPRGRDIL (250 aa)) folds into the Radical SAM core domain. A disulfide bond links Cys138 and Cys383. Positions 145, 149, and 152 each coordinate [4Fe-4S] cluster. S-adenosyl-L-methionine-binding positions include 209–210 (GE), Ser241, 263–265 (SLH), and Asn340. Cys383 functions as the S-methylcysteine intermediate in the catalytic mechanism.

It belongs to the radical SAM superfamily. RlmN family. The cofactor is [4Fe-4S] cluster.

It localises to the cytoplasm. It catalyses the reaction adenosine(2503) in 23S rRNA + 2 reduced [2Fe-2S]-[ferredoxin] + 2 S-adenosyl-L-methionine = 2-methyladenosine(2503) in 23S rRNA + 5'-deoxyadenosine + L-methionine + 2 oxidized [2Fe-2S]-[ferredoxin] + S-adenosyl-L-homocysteine. The enzyme catalyses adenosine(37) in tRNA + 2 reduced [2Fe-2S]-[ferredoxin] + 2 S-adenosyl-L-methionine = 2-methyladenosine(37) in tRNA + 5'-deoxyadenosine + L-methionine + 2 oxidized [2Fe-2S]-[ferredoxin] + S-adenosyl-L-homocysteine. Specifically methylates position 2 of adenine 2503 in 23S rRNA and position 2 of adenine 37 in tRNAs. m2A2503 modification seems to play a crucial role in the proofreading step occurring at the peptidyl transferase center and thus would serve to optimize ribosomal fidelity. The sequence is that of Dual-specificity RNA methyltransferase RlmN from Brucella suis biovar 1 (strain 1330).